Consider the following 232-residue polypeptide: Large ribosomal subunit protein uL1 (232 aa).

It belongs to the universal ribosomal protein uL1 family. Part of the 50S ribosomal subunit.

Its function is as follows. Binds directly to 23S rRNA. The L1 stalk is quite mobile in the ribosome, and is involved in E site tRNA release. Protein L1 is also a translational repressor protein, it controls the translation of the L11 operon by binding to its mRNA. The chain is Large ribosomal subunit protein uL1 from Stenotrophomonas maltophilia (strain R551-3).